We begin with the raw amino-acid sequence, 86 residues long: Serine protease inhibitor Kazal-type 2 (86 aa).

The first 16 residues, 1–16, serve as a signal peptide directing secretion; sequence MLRLVLLLLATDFAAS. One can recognise a Kazal-like domain in the interval 32 to 86; that stretch reads QFRTPDCHRFDYPVCSKHLSPVCGTDMNTYGNECTLCMKIREDGSHINIIKDEPC. 3 disulfides stabilise this stretch: Cys-38/Cys-68, Cys-46/Cys-65, and Cys-54/Cys-86.

It is found in the secreted. The protein localises to the cytoplasmic vesicle. It localises to the secretory vesicle. Its subcellular location is the acrosome. In terms of biological role, as a strong inhibitor of acrosin, it is required for normal spermiogenesis. It probably hinders premature activation of proacrosin and other proteases, thus preventing the cascade of events leading to spermiogenesis defects. May be involved in the regulation of serine protease-dependent germ cell apoptosis. It also inhibits trypsin. The sequence is that of Serine protease inhibitor Kazal-type 2 (Spink2) from Rattus norvegicus (Rat).